The chain runs to 493 residues: NAD(P)H-quinone oxidoreductase chain 4, chloroplastic (493 aa).

14 helical membrane passes run 4–24 (FPWL…IPLL), 34–54 (WYTL…FGYY), 87–107 (MGLI…AWPI), 111–131 (PKLF…LFTS), 134–154 (LFLF…LISL), 167–187 (FIFY…TVCF), 212–232 (ILYL…PFHT), 242–262 (HYST…YGWI), 276–296 (FAPW…SVCL), 313–333 (MGFV…GAIC), 334–354 (QMIS…TTYD), 385–405 (SLAL…LGII), 417–437 (FIIL…LSML), and 462–482 (VFII…PNIL).

It belongs to the complex I subunit 4 family.

The protein resides in the plastid. It is found in the chloroplast thylakoid membrane. It catalyses the reaction a plastoquinone + NADH + (n+1) H(+)(in) = a plastoquinol + NAD(+) + n H(+)(out). It carries out the reaction a plastoquinone + NADPH + (n+1) H(+)(in) = a plastoquinol + NADP(+) + n H(+)(out). The protein is NAD(P)H-quinone oxidoreductase chain 4, chloroplastic of Chara vulgaris (Common stonewort).